The sequence spans 109 residues: uncharacterized protein (109 aa).

Residues 1 to 23 form the signal peptide; that stretch reads MKNYNFILISLFIIFFIILNISS. A glycan (N-linked (GlcNAc...) asparagine) is linked at asparagine 27. The interval 45–109 is disordered; the sequence is YQEYMENRTP…KKDQQNQQQN (65 aa). Low complexity predominate over residues 54 to 72; the sequence is PNEQQQQQQQQQNNNNPPQ. Residues 94–103 show a composition bias toward basic and acidic residues; sequence KLKEKLKKDQ.

Its subcellular location is the secreted. This is an uncharacterized protein from Dictyostelium discoideum (Social amoeba).